A 397-amino-acid chain; its full sequence is Serpin B10 (397 aa).

Positions 74-77 (KKRK) match the Nuclear localization signal motif.

The protein belongs to the serpin family. Ov-serpin subfamily.

The protein resides in the nucleus. It localises to the cytoplasm. Functionally, protease inhibitor that may play a role in the regulation of protease activities during hematopoiesis and apoptosis induced by TNF. May regulate protease activities in the cytoplasm and in the nucleus. The chain is Serpin B10 (SERPINB10) from Otolemur garnettii (Small-eared galago).